The following is a 321-amino-acid chain: PIH1 domain-containing protein 2 (321 aa).

The protein belongs to the PIH1 family.

The chain is PIH1 domain-containing protein 2 (pih1d2) from Xenopus tropicalis (Western clawed frog).